Here is a 173-residue protein sequence, read N- to C-terminus: RNA silencing suppressor p19 (173 aa).

Residues 1–21 show a composition bias toward basic and acidic residues; sequence MERAIQRSDAREQANSERWDG. The interval 1 to 34 is disordered; it reads MERAIQRSDAREQANSERWDGRCGGTITPFKLPD.

It belongs to the tombusvirus protein p19 family. Homodimer.

Viral suppressor of RNA silencing which binds specifically to silencing RNAs (siRNAs). Acts as a molecular caliper to specifically select siRNAs based on the length of the duplex region of the RNA. This is RNA silencing suppressor p19 from Cucumis sativus (Cucumber).